A 150-amino-acid polypeptide reads, in one-letter code: Large ribosomal subunit protein bL9 (150 aa).

This sequence belongs to the bacterial ribosomal protein bL9 family.

Functionally, binds to the 23S rRNA. The polypeptide is Large ribosomal subunit protein bL9 (Streptococcus gordonii (strain Challis / ATCC 35105 / BCRC 15272 / CH1 / DL1 / V288)).